The sequence spans 87 residues: Apolipoprotein C-I (87 aa).

Residues 1–26 (MRLILSLPVLAVVLAMVLEGPAPAQA) form the signal peptide.

Belongs to the apolipoprotein C1 family.

The protein resides in the secreted. Functionally, inhibitor of lipoprotein binding to the low density lipoprotein (LDL) receptor, LDL receptor-related protein, and very low density lipoprotein (VLDL) receptor. Associates with high density lipoproteins (HDL) and the triacylglycerol-rich lipoproteins in the plasma and makes up about 10% of the protein of the VLDL and 2% of that of HDL. Appears to interfere directly with fatty acid uptake and is also the major plasma inhibitor of cholesteryl ester transfer protein (CETP). Binds free fatty acids and reduces their intracellular esterification. Modulates the interaction of APOE with beta-migrating VLDL and inhibits binding of beta-VLDL to the LDL receptor-related protein. In Pteropus vampyrus (Large flying fox), this protein is Apolipoprotein C-I (APOC1).